Here is a 383-residue protein sequence, read N- to C-terminus: Chaperone protein DnaJ (383 aa).

Residues 6-70 form the J domain; the sequence is DYYDVLGVGR…QKRAAYDQYG (65 aa). The CR-type zinc finger occupies 140 to 222; it reads GKETKISYSR…CHGTGREEER (83 aa). The Zn(2+) site is built by cysteine 153, cysteine 156, cysteine 170, cysteine 173, cysteine 196, cysteine 199, cysteine 210, and cysteine 213. CXXCXGXG motif repeat units lie at residues 153-160, 170-177, 196-203, and 210-217; these read CHTCHGSG, CHKCHGAG, CDVCGGTG, and CDTCHGTG.

It belongs to the DnaJ family. As to quaternary structure, homodimer. Zn(2+) serves as cofactor.

Its subcellular location is the cytoplasm. Its function is as follows. Participates actively in the response to hyperosmotic and heat shock by preventing the aggregation of stress-denatured proteins and by disaggregating proteins, also in an autonomous, DnaK-independent fashion. Unfolded proteins bind initially to DnaJ; upon interaction with the DnaJ-bound protein, DnaK hydrolyzes its bound ATP, resulting in the formation of a stable complex. GrpE releases ADP from DnaK; ATP binding to DnaK triggers the release of the substrate protein, thus completing the reaction cycle. Several rounds of ATP-dependent interactions between DnaJ, DnaK and GrpE are required for fully efficient folding. Also involved, together with DnaK and GrpE, in the DNA replication of plasmids through activation of initiation proteins. This Latilactobacillus sakei subsp. sakei (strain 23K) (Lactobacillus sakei subsp. sakei) protein is Chaperone protein DnaJ.